The chain runs to 152 residues: Protein SprT-like (152 aa).

One can recognise a SprT-like domain in the interval 7–148; it reads QRLVEEVSLQ…GKCKGKLNLI (142 aa). His-67 contributes to the Zn(2+) binding site. Glu-68 is a catalytic residue. His-71 contributes to the Zn(2+) binding site.

The protein belongs to the SprT family. Zn(2+) is required as a cofactor.

It localises to the cytoplasm. In Bacillus anthracis (strain A0248), this protein is Protein SprT-like.